A 76-amino-acid polypeptide reads, in one-letter code: ATP synthase subunit 9, mitochondrial (76 aa).

2 helical membrane-spanning segments follow: residues 14-34 (IATI…AALI) and 52-72 (ILGF…SFLL).

This sequence belongs to the ATPase C chain family. As to quaternary structure, F-type ATPases have 2 components, CF(1) - the catalytic core - and CF(0) - the membrane proton channel. CF(1) has five subunits: alpha(3), beta(3), gamma(1), delta(1), epsilon(1). CF(0) has three main subunits: a, b and c.

Its subcellular location is the mitochondrion membrane. Functionally, mitochondrial membrane ATP synthase (F(1)F(0) ATP synthase or Complex V) produces ATP from ADP in the presence of a proton gradient across the membrane which is generated by electron transport complexes of the respiratory chain. F-type ATPases consist of two structural domains, F(1) - containing the extramembraneous catalytic core and F(0) - containing the membrane proton channel, linked together by a central stalk and a peripheral stalk. During catalysis, ATP synthesis in the catalytic domain of F(1) is coupled via a rotary mechanism of the central stalk subunits to proton translocation. Part of the complex F(0) domain. A homomeric c-ring of probably 10 subunits is part of the complex rotary element. In Wickerhamomyces canadensis (Yeast), this protein is ATP synthase subunit 9, mitochondrial (ATP9).